Reading from the N-terminus, the 419-residue chain is Cell division protein FtsZ (419 aa).

GTP is bound by residues 22–26, 109–111, Glu140, Arg144, and Asp188; these read GGGGN and GSG. A disordered region spans residues 397–419; the sequence is ERFEAPISQDEDELDTPPFFKNR.

The protein belongs to the FtsZ family. As to quaternary structure, homodimer. Polymerizes to form a dynamic ring structure in a strictly GTP-dependent manner. Interacts directly with several other division proteins. Interacts with CcrZ; the interaction is direct.

It localises to the cytoplasm. Its function is as follows. Essential cell division protein that forms a contractile ring structure (Z ring) at the future cell division site. The regulation of the ring assembly controls the timing and the location of cell division. One of the functions of the FtsZ ring is to recruit other cell division proteins to the septum to produce a new cell wall between the dividing cells. Binds GTP and shows GTPase activity. The polypeptide is Cell division protein FtsZ (Streptococcus pneumoniae serotype 2 (strain D39 / NCTC 7466)).